Here is a 128-residue protein sequence, read N- to C-terminus: NADH-quinone oxidoreductase subunit A (128 aa).

3 helical membrane-spanning segments follow: residues 12–32 (FAIF…LSFL), 66–86 (FYLI…LYAW), and 96–116 (LGFY…VYLV).

Belongs to the complex I subunit 3 family. NDH-1 is composed of 14 different subunits. Subunits NuoA, H, J, K, L, M, N constitute the membrane sector of the complex.

The protein localises to the cell membrane. It catalyses the reaction a quinone + NADH + 5 H(+)(in) = a quinol + NAD(+) + 4 H(+)(out). Functionally, NDH-1 shuttles electrons from NADH, via FMN and iron-sulfur (Fe-S) centers, to quinones in the respiratory chain. The immediate electron acceptor for the enzyme in this species is believed to be ubiquinone. Couples the redox reaction to proton translocation (for every two electrons transferred, four hydrogen ions are translocated across the cytoplasmic membrane), and thus conserves the redox energy in a proton gradient. The sequence is that of NADH-quinone oxidoreductase subunit A from Baumannia cicadellinicola subsp. Homalodisca coagulata.